Consider the following 60-residue polypeptide: Myrmicitoxin(1)-Pr4a (60 aa).

The signal sequence occupies residues 1 to 23; the sequence is MKAIIFLFAVLTVVAIIIPIISG. A propeptide spanning residues 24 to 33 is cleaved from the precursor; the sequence is EPNAGPHAAS. Gln59 is modified (glutamine amide).

It belongs to the formicidae venom clade 2 family. As to expression, expressed by the venom gland.

It is found in the secreted. Functionally, toxin that causes a rapid and irreversible paralysis when intrathoracically injected into insects (blowflies). Does not cause spontaneous nocifensive behaviors by intraplantar injection in mice. The sequence is that of Myrmicitoxin(1)-Pr4a from Pogonomyrmex rugosus (Desert harvester ant).